Here is a 679-residue protein sequence, read N- to C-terminus: Methionine--tRNA ligase (679 aa).

Zn(2+)-binding residues include Cys147, Cys150, Cys160, and Cys163. The 'KMSKS' region signature appears at Lys332 to Ser336. ATP is bound at residue Thr335. The tRNA-binding domain maps to Asp578–Lys679.

This sequence belongs to the class-I aminoacyl-tRNA synthetase family. MetG type 1 subfamily. In terms of assembly, homodimer. Requires Zn(2+) as cofactor.

The protein resides in the cytoplasm. It catalyses the reaction tRNA(Met) + L-methionine + ATP = L-methionyl-tRNA(Met) + AMP + diphosphate. Its function is as follows. Is required not only for elongation of protein synthesis but also for the initiation of all mRNA translation through initiator tRNA(fMet) aminoacylation. The polypeptide is Methionine--tRNA ligase (Bacteroides fragilis (strain YCH46)).